A 243-amino-acid chain; its full sequence is Probable transcriptional regulatory protein LSEI_1022 (243 aa).

Residues 1–23 (MSGHSKWHNIQGRKNAQDSKRGK) form a disordered region.

Belongs to the TACO1 family.

The protein localises to the cytoplasm. This chain is Probable transcriptional regulatory protein LSEI_1022, found in Lacticaseibacillus paracasei (strain ATCC 334 / BCRC 17002 / CCUG 31169 / CIP 107868 / KCTC 3260 / NRRL B-441) (Lactobacillus paracasei).